A 1663-amino-acid chain; its full sequence is MGPASGSQLLVLLLLLASSPLALGIPMYSIITPNVLRLESEETIVLEAHDAQGDIPVTVTVQDFLKRQVLTSEKTVLTGASGHLRSVSIKIPASKEFNSDKEGHKYVTVVANFGETVVEKAVMVSFQSGYLFIQTDKTIYTPGSTVLYRIFTVDNNLLPVGKTVVILIETPDGIPVKRDILSSNNQHGILPLSWNIPELVNMGQWKIRAFYEHAPKQIFSAEFEVKEYVLPSFEVRVEPTETFYYIDDPNGLEVSIIAKFLYGKNVDGTAFVIFGVQDGDKKISLAHSLTRVVIEDGVGDAVLTRKVLMEGVRPSNADALVGKSLYVSVTVILHSGSDMVEAERSGIPIVTSPYQIHFTKTPKFFKPAMPFDLMVFVTNPDGSPASKVLVVTQGSNAKALTQDDGVAKLSINTPNSRQPLTITVRTKKDTLPESRQATKTMEAHPYSTMHNSNNYLHLSVSRMELKPGDNLNVNFHLRTDPGHEAKIRYYTYLVMNKGKLLKAGRQVREPGQDLVVLSLPITPEFIPSFRLVAYYTLIGASGQREVVADSVWVDVKDSCIGTLVVKGDPRDNHLAPGQQTTLRIEGNQGARVGLVAVDKGVFVLNKKNKLTQSKIWDVVEKADIGCTPGSGKNYAGVFMDAGLAFKTSQGLQTEQRADLECTKPAARRRRSVQLMERRMDKAGQYTDKGLRKCCEDGMRDIPMRYSCQRRARLITQGENCIKAFIDCCNHITKLREQHRRDHVLGLARSELEEDIIPEEDIISRSHFPQSWLWTIEELKEPEKNGISTKVMNIFLKDSITTWEILAVSLSDKKGICVADPYEIRVMQDFFIDLRLPYSVVRNEQVEIRAVLFNYREQEELKVRVELLHNPAFCSMATAKNRYFQTIKIPPKSSVAVPYVIVPLKIGQQEVEVKAAVFNHFISDGVKKTLKVVPEGMRINKTVAIHTLDPEKLGQGGVQKVDVPAADLSDQVPDTDSETRIILQGSPVVQMAEDAVDGERLKHLIVTPAGCGEQNMIGMTPTVIAVHYLDQTEQWEKFGIEKRQEALELIKKGYTQQLAFKQPSSAYAAFNNRPPSTWLTAYVVKVFSLAANLIAIDSHVLCGAVKWLILEKQKPDGVFQEDGPVIHQEMIGGFRNAKEADVSLTAFVLIALQEARDICEGQVNSLPGSINKAGEYIEASYMNLQRPYTVAIAGYALALMNKLEEPYLGKFLNTAKDRNRWEEPDQQLYNVEATSYALLALLLLKDFDSVPPVVRWLNEQRYYGGGYGSTQATFMVFQALAQYQTDVPDHKDLNMDVSFHLPSRSSATTFRLLWENGNLLRSEETKQNEAFSLTAKGKGRGTLSVVAVYHAKLKSKVTCKKFDLRVSIRPAPETAKKPEEAKNTMFLEICTKYLGDVDATMSILDISMMTGFAPDTKDLELLASGVDRYISKYEMNKAFSNKNTLIIYLEKISHTEEDCLTFKVHQYFNVGLIQPGSVKVYSYYNLEESCTRFYHPEKDDGMLSKLCHSEMCRCAEENCFMQQSQEKINLNVRLDKACEPGVDYVYKTELTNIELLDDFDEYTMTIQQVIKSGSDEVQAGQQRKFISHIKCRNALKLQKGKKYLMWGLSSDLWGEKPNTSYIIGKDTWVEHWPEAEECQDQKYQKQCEELGAFTESMVVYGCPN.

The first 24 residues, 1–24, serve as a signal peptide directing secretion; sequence MGPASGSQLLVLLLLLASSPLALG. Ser-40 carries the phosphoserine modification. Disulfide bonds link Cys-559/Cys-816, Cys-626/Cys-661, Cys-693/Cys-720, Cys-694/Cys-727, Cys-707/Cys-728, Cys-873/Cys-1513, Cys-1101/Cys-1158, Cys-1358/Cys-1489, Cys-1389/Cys-1458, Cys-1506/Cys-1511, Cys-1518/Cys-1590, Cys-1537/Cys-1661, and Cys-1637/Cys-1646. Ser-671 carries the post-translational modification Phosphoserine. The Anaphylatoxin-like domain maps to 693–728; sequence CCEDGMRDIPMRYSCQRRARLITQGENCIKAFIDCC. N-linked (GlcNAc...) asparagine glycosylation occurs at Asn-939. Position 968 is a phosphoserine (Ser-968). A cross-link (isoglutamyl cysteine thioester (Cys-Gln)) is located at residues 1010–1013; that stretch reads CGEQ. Ser-1321 is subject to Phosphoserine. Residues 1518 to 1661 form the NTR domain; that stretch reads CFMQQSQEKI…FTESMVVYGC (144 aa). Ser-1573 is subject to Phosphoserine. Asn-1617 carries N-linked (GlcNAc...) asparagine glycosylation. Residues 1634–1659 are interaction with CFP/properdin; that stretch reads AEECQDQKYQKQCEELGAFTESMVVY.

In absence of complement activation, the C3 precursor is first processed by the removal of 4 Arg residues, forming two chains, beta and alpha, linked by a disulfide bond. In terms of assembly, complement C3b is composed of complement C3b and complement C3 beta chains that are associated via disulfide bonds. Non-enzymatic component of the C5 convertase, also named C4bC2bC3b, composed of the serine protease complement C2b (C2), complement C3b, as well as complement C4b (C4). Non-enzymatic component of the C5 convertase of the alternative complement pathways composed of the serine protease complement CFB and complement C3b. Interacts with CFP; interaction takes place together with CFB in the alternative complement system and allows the complex to become active. Interacts with CR1 (via Sushi 8 and Sushi 9 domains). Interacts with CFH. As to quaternary structure, interacts with CFH. Interacts with CR2. During pregnancy, C3dg exists as a complex (probably a 2:2:2 heterohexamer) with AGT and the proform of PRG2. Interacts with CR2 (via the N-terminal Sushi domains 1 and 2). In terms of processing, C3 precursor is first processed by the removal of 4 Arg residues, forming two chains, beta and alpha, linked by a disulfide bond. During activation of the complement systems, the alpha chain is cleaved into C3a and C3b by the C3 convertase: C3b stays linked to the beta chain, while C3a is released in the plasma. The alpha chain is cleaved by the serine protease complement C2b component of the C3 convertase to generate C3a and C3b following activation by the classical, lectin and GZMK complement systems. The alpha chain is cleaved by CFB component of the C3 convertase to generate C3a and C3b following activation by the alternative complement system. Post-translationally, C3a is further processed by carboxypeptidases to release the C-terminal arginine residue generating the acylation stimulating protein (ASP). Levels of ASP are increased in adipocytes in the postprandial period and by insulin and dietary chylomicrons. Complement C3b is rapidly split in two positions by factor I (CFI) and a cofactor (CFH) to form iC3b (inactivated C3b) and C3f which is released. CFI and CFH catalyze proteolytic degradation of already-deposited complement C3b. Then iC3b is slowly cleaved (possibly by CFI) to form C3c (beta chain + alpha' chain fragment 1 + alpha' chain fragment 2), C3dg and C3f. Other proteases produce other fragments such as C3d or C3g. In terms of processing, upon activation, the internal thioester bond reacts with carbohydrate antigens on the target surface to form amide or ester bonds, leading to covalent association with the surface of pathogens. Post-translationally, complement C3b interacts with complement C4b via a thioester linkage. Phosphorylated by FAM20C in the extracellular medium.

Its subcellular location is the secreted. It is found in the cell surface. Its activity is regulated as follows. Complement activation is inhibited by VSIG4. Functionally, precursor of non-enzymatic components of the classical, alternative, lectin and GZMK complement pathways, which consist in a cascade of proteins that leads to phagocytosis and breakdown of pathogens and signaling that strengthens the adaptive immune system. Its function is as follows. Non-enzymatic component of C5 convertase. Generated following cleavage by C3 convertase, it covalently attaches to the surface of pathogens, where it acts as an opsonin that marks the surface of antigens for removal. Complement C3b binds covalently via its reactive thioester, to cell surface carbohydrates or immune aggregates. Together with complement C4b, it then recruits the serine protease complement C2b to form the C5 convertase, which cleaves and activate C5, the next component of the complement pathways. In the alternative complement pathway, recruits the serine protease CFB to form the C5 convertase that cleaves and activates C5. Mediator of local inflammatory process released following cleavage by C3 convertase. Acts by binding to its receptor, C3AR1, activating G protein-coupled receptor signaling, promoting the phosphorylation, ARRB2-mediated internalization and endocytosis of C3AR1. C3a anaphylatoxin stimulates the activation of immune cells such as mast cells and basophilic leukocytes to release inflammation agents, such as cytokines, chemokines and histamine, which promote inflammation development. Also acts as potent chemoattractant for the migration of macrophages and neutrophils to the inflamed tissues, resulting in neutralization of the inflammatory triggers by multiple ways, such as phagocytosis and generation of reactive oxidants. In terms of biological role, adipogenic hormone that stimulates triglyceride synthesis and glucose transport in adipocytes, regulating fat storage and playing a role in postprandial triglyceride clearance. Appears to stimulate triglyceride synthesis via activation of the PLC, MAPK and AKT signaling pathways. Acts by binding to its receptor, C5AR2, activating G protein-coupled receptor signaling, promoting the phosphorylation, ARRB2-mediated internalization and endocytosis of C5AR2. Functionally, acts as a chemoattractant for neutrophils in chronic inflammation. The chain is Complement C3 from Mus musculus (Mouse).